The sequence spans 427 residues: Glutamate-1-semialdehyde 2,1-aminomutase (427 aa).

N6-(pyridoxal phosphate)lysine is present on K265.

The protein belongs to the class-III pyridoxal-phosphate-dependent aminotransferase family. HemL subfamily. Homodimer. Pyridoxal 5'-phosphate is required as a cofactor.

Its subcellular location is the cytoplasm. The catalysed reaction is (S)-4-amino-5-oxopentanoate = 5-aminolevulinate. The protein operates within porphyrin-containing compound metabolism; protoporphyrin-IX biosynthesis; 5-aminolevulinate from L-glutamyl-tRNA(Glu): step 2/2. The protein is Glutamate-1-semialdehyde 2,1-aminomutase of Pseudomonas putida (strain GB-1).